A 696-amino-acid polypeptide reads, in one-letter code: Rho-related BTB domain-containing protein 1 (696 aa).

The segment at 1 to 210 (MDADMDYERP…DNAIRAALIS (210 aa)) is rho-like. GTP contacts are provided by residues 21 to 28 (GDNAVGKT), 84 to 88 (DTFGD), and 140 to 143 (CQLD). BTB domains lie at 266-427 (ADVL…DEKE) and 485-552 (SDVT…SPNL). Positions 327–348 (VDPEEEREEGPPRIPQADQWKS) are disordered.

The protein belongs to the small GTPase superfamily. Rho family. In terms of tissue distribution, ubiquitous, with highest levels in skeletal muscle, placenta, testis, stomach, and kidney, followed by uterus and adrenal gland. Expressed in a variety of fetal tissues.

This chain is Rho-related BTB domain-containing protein 1 (RHOBTB1), found in Homo sapiens (Human).